A 447-amino-acid chain; its full sequence is Exodeoxyribonuclease 7 large subunit (447 aa).

This sequence belongs to the XseA family. As to quaternary structure, heterooligomer composed of large and small subunits.

Its subcellular location is the cytoplasm. The catalysed reaction is Exonucleolytic cleavage in either 5'- to 3'- or 3'- to 5'-direction to yield nucleoside 5'-phosphates.. Its function is as follows. Bidirectionally degrades single-stranded DNA into large acid-insoluble oligonucleotides, which are then degraded further into small acid-soluble oligonucleotides. The sequence is that of Exodeoxyribonuclease 7 large subunit from Pediococcus pentosaceus (strain ATCC 25745 / CCUG 21536 / LMG 10740 / 183-1w).